A 685-amino-acid chain; its full sequence is Mannan-binding lectin serine protease 2 (685 aa).

The N-terminal stretch at 1–19 (MRLLIVLGLLWSLVATLLG) is a signal peptide. The CUB 1 domain occupies 20 to 137 (SKWPEPVFGR…TGFEAFYAAE (118 aa)). 2 residues coordinate Ca(2+): E67 and D75. Cysteines 72 and 90 form a disulfide. N103 is a glycosylation site (N-linked (GlcNAc...) asparagine). Positions 120, 122, 123, 138, and 139 each coordinate Ca(2+). The 44-residue stretch at 138 to 181 (DVDECRTSLGDSVPCDHYCHNYLGGYYCSCRVGYILHQNKHTCS) folds into the EGF-like; calcium-binding domain. 4 disulfides stabilise this stretch: C152-C165, C167-C180, C184-C211, and C241-C259. At N158 the chain carries (3R)-3-hydroxyasparagine. Residues Y159 and G162 each coordinate Ca(2+). The 113-residue stretch at 184–296 (CSGQVFTGRS…TGWKIHYTST (113 aa)) folds into the CUB 2 domain. Residue N285 is glycosylated (N-linked (GlcNAc...) asparagine). Sushi domains are found at residues 298-363 (QPCP…ECSI) and 364-431 (IDCG…VCKP). Intrachain disulfides connect C300–C348, C328–C361, C366–C411, C396–C429, C433–C551, C597–C617, and C628–C659. A Peptidase S1 domain is found at 444-683 (IIGGQPAKPG…YIPWIENIIN (240 aa)). Catalysis depends on charge relay system residues H482 and D531. The active-site Charge relay system is S632. N641 carries N-linked (GlcNAc...) asparagine glycosylation.

This sequence belongs to the peptidase S1 family. Homodimer; disulfide-linked. Binds MBL2. Isoform 2 binds to MASP1. Binds SERPING1. In terms of processing, N-glycosylated. Post-translationally, the iron and 2-oxoglutarate dependent 3-hydroxylation of aspartate and asparagine is (R) stereospecific within EGF domains. Highly expressed in liver. Secreted in plasma.

It localises to the secreted. The catalysed reaction is Selective cleavage after Arg-223 in complement component C2 (-Ser-Leu-Gly-Arg-|-Lys-Ile-Gln-Ile) and after Arg-76 in complement component C4 (-Gly-Leu-Gln-Arg-|-Ala-Leu-Glu-Ile).. In terms of biological role, serum protease that plays an important role in the activation of the complement system via mannose-binding lectin. After activation by auto-catalytic cleavage it cleaves C2 and C4, leading to their activation and to the formation of C3 convertase. This is Mannan-binding lectin serine protease 2 (Masp2) from Rattus norvegicus (Rat).